The primary structure comprises 386 residues: Zinc finger protein 385A (386 aa).

The segment at 74-98 adopts a Matrin-type 1 zinc-finger fold; the sequence is ISCNICQIRFNSQSQAEAHYKGNRH. The disordered stretch occupies residues 90–193; it reads EAHYKGNRHA…ASLPGGSKEE (104 aa). The segment covering 103–121 has biased composition (basic and acidic residues); sequence KGIEAAKTRGREPGVREPG. Positions 145–351 are necessary for binding to ITPR1, CEBPA and p53/TP53 mRNAs; the sequence is NGLGPAPGSP…AGSPLSLRPA (207 aa). Residue Ser-185 is modified to Phosphoserine. The Matrin-type 2 zinc-finger motif lies at 201-225; it reads LYCALCKVAVNSLSQLEAHNKGTKH. Thr-248 carries the post-translational modification Phosphothreonine. The segment at 261–285 adopts a Matrin-type 3 zinc-finger fold; that stretch reads FHCEICNVKVNSEVQLKQHISSRRH. The segment at 279–309 is disordered; the sequence is HISSRRHRDGVAGKPNPLLSRHKKSRGAGEL.

In terms of assembly, interacts with ELAVL1; the interaction is indirect, mRNA-dependent and may regulate p53/TP53 expression. Interacts with p53/TP53; the interaction is direct and enhances p53/TP53 transactivation functions on cell-cycle arrest target genes, resulting in growth arrest. Post-translationally, ubiquitinated upon prolonged exposure to genotoxic stress, which leads to proteasomal degradation of ZNF385A and releases p53/TP53 from cell-cycle arrest target gene promoters. Expressed predominantly in the retina.

The protein localises to the cytoplasm. The protein resides in the nucleus. Its subcellular location is the nucleolus. It is found in the cell projection. It localises to the dendrite. In terms of biological role, RNA-binding protein that affects the localization and the translation of a subset of mRNA. May play a role in adipogenesis through binding to the 3'-UTR of CEBPA mRNA and regulation of its translation. Targets ITPR1 mRNA to dendrites in Purkinje cells, and may regulate its activity-dependent translation. With ELAVL1, binds the 3'-UTR of p53/TP53 mRNAs to control their nuclear export induced by CDKN2A. Hence, may regulate p53/TP53 expression and mediate in part the CDKN2A anti-proliferative activity. May also bind CCNB1 mRNA. Alternatively, may also regulate p53/TP53 activity through direct protein-protein interaction. Interacts with p53/TP53 and promotes cell-cycle arrest over apoptosis enhancing preferentially the DNA binding and transactivation of p53/TP53 on cell-cycle arrest target genes over proapoptotic target genes. May also regulate the ubiquitination and stability of CDKN1A promoting DNA damage-induced cell cycle arrest. Also plays a role in megakaryocytes differentiation. The polypeptide is Zinc finger protein 385A (ZNF385A) (Homo sapiens (Human)).